Reading from the N-terminus, the 461-residue chain is Photosystem II CP43 reaction center protein (461 aa).

Residues 1–2 (ME) constitute a propeptide that is removed on maturation. T3 carries the post-translational modification N-acetylthreonine. Phosphothreonine is present on T3. The next 5 membrane-spanning stretches (helical) occupy residues 57–81 (LFEV…PHLA), 122–143 (LIGP…KDKN), 166–188 (KAMY…RVIT), 243–263 (KPFA…LSYS), and 279–300 (WFNN…ASQA). E355 is a binding site for [CaMn4O5] cluster. The chain crosses the membrane as a helical span at residues 435-459 (RARAAAAGFEKGIERETEPALSMKP).

The protein belongs to the PsbB/PsbC family. PsbC subfamily. As to quaternary structure, PSII is composed of 1 copy each of membrane proteins PsbA, PsbB, PsbC, PsbD, PsbE, PsbF, PsbH, PsbI, PsbJ, PsbK, PsbL, PsbM, PsbT, PsbX, PsbY, PsbZ, Psb30/Ycf12, at least 3 peripheral proteins of the oxygen-evolving complex and a large number of cofactors. It forms dimeric complexes. The cofactor is Binds multiple chlorophylls and provides some of the ligands for the Ca-4Mn-5O cluster of the oxygen-evolving complex. It may also provide a ligand for a Cl- that is required for oxygen evolution. PSII binds additional chlorophylls, carotenoids and specific lipids..

It is found in the plastid. It localises to the chloroplast thylakoid membrane. In terms of biological role, one of the components of the core complex of photosystem II (PSII). It binds chlorophyll and helps catalyze the primary light-induced photochemical processes of PSII. PSII is a light-driven water:plastoquinone oxidoreductase, using light energy to abstract electrons from H(2)O, generating O(2) and a proton gradient subsequently used for ATP formation. This is Photosystem II CP43 reaction center protein from Chlorokybus atmophyticus (Soil alga).